A 377-amino-acid polypeptide reads, in one-letter code: Erythronate-4-phosphate dehydrogenase (377 aa).

Positions 45 and 67 each coordinate substrate. Residues 127–128, D147, and T176 each bind NAD(+); that span reads QV. R209 is a catalytic residue. D233 serves as a coordination point for NAD(+). The active site involves E238. The Proton donor role is filled by H255. Position 258 (G258) interacts with NAD(+). Y259 provides a ligand contact to substrate.

Belongs to the D-isomer specific 2-hydroxyacid dehydrogenase family. PdxB subfamily. As to quaternary structure, homodimer.

It localises to the cytoplasm. The catalysed reaction is 4-phospho-D-erythronate + NAD(+) = (R)-3-hydroxy-2-oxo-4-phosphooxybutanoate + NADH + H(+). The protein operates within cofactor biosynthesis; pyridoxine 5'-phosphate biosynthesis; pyridoxine 5'-phosphate from D-erythrose 4-phosphate: step 2/5. Catalyzes the oxidation of erythronate-4-phosphate to 3-hydroxy-2-oxo-4-phosphonooxybutanoate. The polypeptide is Erythronate-4-phosphate dehydrogenase (Vibrio vulnificus (strain CMCP6)).